A 505-amino-acid polypeptide reads, in one-letter code: MMKFSDTASCRDGGERPEEEGKGAGGRSKLRMGKEEFTGSVGKEEAAAVASMSSSKDRICSTSTQLSQLHGFPPSMYPFAFSSNMRGSPPFDLTNGGAYFRSFPTDLPKEMASLSVETQSTSSEEMVPSSPSPPPPPRVYKPCFVCNDKSSGYHYGVSSCEGCKGFFRRSIQKNMVYTCHRDKNCQINKVTRNRCQYCRLQKCFEVGMSKEAVRNDRNKKKKEIKEEVVTDSYEMPPEMEALIQKVSKAHQETFPSLCQLGKYTTNSSADHRVQLDLGLWHKFSELATKCIIKIVEFAKRLPGFATLTIADQITLLKAACLDILMLRICTRYTPEQDTMTFSDGLTLNRTQMHNAGFGPLTDLVFAFAEQLLPLEMDDTETGLLSAICLICGDRMDLEEPEKVDKLQEPLLEALKIYARRRRPNKPYMFPRMLMKITDLRGISTKGAERAITLKMEIPGPMPPLIREMLENPEAFEDDASPPPKSEQKPIKVEEKPGEKTSTKDP.

Disordered stretches follow at residues 1 to 57 (MMKF…SSKD) and 113 to 134 (SLSVETQSTSSEEMVPSSPSPP). Composition is skewed to basic and acidic residues over residues 12 to 22 (DGGERPEEEGK) and 32 to 46 (MGKEEFTGSVGKEEA). The tract at residues 52–142 (MSSSKDRICS…PPPPPRVYKP (91 aa)) is modulating. Polar residues predominate over residues 115 to 124 (SVETQSTSSE). 2 consecutive NR C4-type zinc fingers follow at residues 143–163 (CFVCNDKSSGYHYGVSSCEGC) and 179–203 (CHRDKNCQINKVTRNRCQYCRLQKC). Positions 143-208 (CFVCNDKSSG…RLQKCFEVGM (66 aa)) form a DNA-binding region, nuclear receptor. The segment at 209 to 237 (SKEAVRNDRNKKKKEIKEEVVTDSYEMPP) is hinge. Positions 238–472 (EMEALIQKVS…PLIREMLENP (235 aa)) constitute an NR LBD domain. A disordered region spans residues 462–505 (PPLIREMLENPEAFEDDASPPPKSEQKPIKVEEKPGEKTSTKDP). A compositionally biased stretch (basic and acidic residues) spans 485 to 505 (SEQKPIKVEEKPGEKTSTKDP).

This sequence belongs to the nuclear hormone receptor family. NR1 subfamily. In terms of assembly, heterodimer; with a RXR molecule. Binds DNA preferentially as a RAR/RXR heterodimer. In terms of tissue distribution, isoform Delta-1A and Isoform Delta-1B are most abundant in regenerating limbs, tails, and the anterior half of the lower jaw. Isoform Delta-2 is broadly and uniformly distributed.

Its subcellular location is the nucleus. Functionally, receptor for retinoic acid. Retinoic acid receptors bind as heterodimers to their target response elements in response to their ligands, all-trans or 9-cis retinoic acid, and regulate gene expression in various biological processes. The RAR/RXR heterodimers bind to the retinoic acid response elements (RARE) composed of tandem 5'-AGGTCA-3' sites known as DR1-DR5. In Notophthalmus viridescens (Eastern newt), this protein is Retinoic acid receptor gamma (RARG).